The following is a 232-amino-acid chain: MALARLALRNLQQKLSPSLMGQSCERGLVGNRHNPMKLNRFMATSAGEQEDKMNTEVSVSEKKSPRQNFPRRRGRKSLWRNTDDHGYFTPTLNEFFPPTIGNTLIQATENMNRIFDNFNVNPFQLMGQVKEQDDCYKLRYEVPGLTKEDVKITVNDGILTIKGDHKAEEEKGSPEEDEYWSSKSYGYYNTSLSLPDDAKVEDIKAELKNGVLNLVIPRTEKPKKNVQEISVE.

Residues 1–42 (MALARLALRNLQQKLSPSLMGQSCERGLVGNRHNPMKLNRFM) constitute a mitochondrion transit peptide. The tract at residues 44–82 (TSAGEQEDKMNTEVSVSEKKSPRQNFPRRRGRKSLWRNT) is disordered. Residues 49 to 64 (QEDKMNTEVSVSEKKS) show a composition bias toward basic and acidic residues. The segment covering 69–78 (FPRRRGRKSL) has biased composition (basic residues). A sHSP domain is found at 114–232 (IFDNFNVNPF…KKNVQEISVE (119 aa)).

Belongs to the small heat shock protein (HSP20) family. May form oligomeric structures.

It localises to the mitochondrion. The chain is 26.5 kDa heat shock protein, mitochondrial (HSP26.5) from Arabidopsis thaliana (Mouse-ear cress).